Consider the following 466-residue polypeptide: Tissue alpha-L-fucosidase (466 aa).

Residues 1–31 form the signal peptide; sequence MRAPGMRSRPAGPALLLLLLFLGAAESVRRA. Position 170 is a phosphothreonine (T170). N241, N268, and N382 each carry an N-linked (GlcNAc...) asparagine glycan.

The protein belongs to the glycosyl hydrolase 29 family. As to quaternary structure, homotetramer.

The protein localises to the lysosome. The catalysed reaction is an alpha-L-fucoside + H2O = L-fucose + an alcohol. It catalyses the reaction a neolactoside IV(2)-alpha-Fuc-nLc4Cer(d18:1(4E)) + H2O = a neolactoside nLc4Cer(d18:1(4E)) + L-fucose. It carries out the reaction a neolactoside IV(2)-alpha-Fuc-nLc4Cer(d18:0) + H2O = a neolactoside nLc4Cer(d18:0) + L-fucose. Its function is as follows. Alpha-L-fucosidase is responsible for hydrolyzing the alpha-1,6-linked fucose joined to the reducing-end N-acetylglucosamine of the carbohydrate moieties of glycoproteins. The polypeptide is Tissue alpha-L-fucosidase (Homo sapiens (Human)).